Here is a 30-residue protein sequence, read N- to C-terminus: Uperin-6.2 (30 aa).

In terms of tissue distribution, expressed by the skin dorsal glands.

The protein localises to the secreted. The chain is Uperin-6.2 from Uperoleia inundata (Floodplain toadlet).